We begin with the raw amino-acid sequence, 437 residues long: Sulfite reductase, dissimilatory-type subunit alpha (437 aa).

[4Fe-4S] cluster-binding residues include Cys177, Cys183, Cys221, Cys225, Cys284, Cys303, Cys306, and Cys309. The region spanning 294 to 322 is the 4Fe-4S ferredoxin-type domain; it reads SKLSIDNKECVRCMHCINTMPRALHIGDE.

In terms of assembly, heterohexamer of two alpha, two beta and two gamma subunits.

In terms of biological role, part of the complex that catalyzes the reduction of sulfite to sulfide. The alpha and beta subunits may have arisen by gene duplication. They both bind 2 iron-sulfur clusters, but the alpha subunit seems to be catalytically inactive, due to substitutions along the putative substrate access channel, and because it binds sirohydrochlorin (the dematallated form of siroheme) instead of siroheme. The polypeptide is Sulfite reductase, dissimilatory-type subunit alpha (dsvA) (Nitratidesulfovibrio vulgaris (strain ATCC 29579 / DSM 644 / CCUG 34227 / NCIMB 8303 / VKM B-1760 / Hildenborough) (Desulfovibrio vulgaris)).